A 362-amino-acid polypeptide reads, in one-letter code: Spermidine/putrescine import ATP-binding protein PotA (362 aa).

Residues 4-235 (IKLDHITKQY…PVNDFVARFI (232 aa)) enclose the ABC transporter domain. 37-44 (GPSGSGKT) is an ATP binding site.

It belongs to the ABC transporter superfamily. Spermidine/putrescine importer (TC 3.A.1.11.1) family. The complex is composed of two ATP-binding proteins (PotA), two transmembrane proteins (PotB and PotC) and a solute-binding protein (PotD).

The protein resides in the cell membrane. It catalyses the reaction ATP + H2O + polyamine-[polyamine-binding protein]Side 1 = ADP + phosphate + polyamineSide 2 + [polyamine-binding protein]Side 1.. Functionally, part of the ABC transporter complex PotABCD involved in spermidine/putrescine import. Responsible for energy coupling to the transport system. The sequence is that of Spermidine/putrescine import ATP-binding protein PotA from Lactobacillus delbrueckii subsp. bulgaricus (strain ATCC BAA-365 / Lb-18).